The chain runs to 427 residues: Inward rectifier potassium channel 2 (427 aa).

Topologically, residues 1 to 81 (MGSVRTNRYS…IFTTCVDIRW (81 aa)) are cytoplasmic. Residues 82-106 (RWMLVIFCLTFILSWLFFGCVFWLI) form a helical membrane-spanning segment. Over 107-128 (ALLHGDLENQENNKPCVSQVSS) the chain is Extracellular. Residues 129-140 (FTAAFLFSIETQ) constitute an intramembrane region (helical; Pore-forming). The segment at residues 141–147 (TTIGYGF) is an intramembrane region (pore-forming). A Selectivity filter motif is present at residues 142–147 (TIGYGF). Residues 148-156 (RCVTDECPI) are Extracellular-facing. A helical transmembrane segment spans residues 157 to 178 (AVFMVVFQSIVGCIIDAFIIGA). Residues 179 to 427 (VMAKMAKPKK…PRPLRRESEI (249 aa)) lie on the Cytoplasmic side of the membrane. The segment at 181–208 (AKMAKPKKRNETLVFSHNAVVAMRDGKL) is polyphosphoinositide (PIP2)-binding. Residues 386–427 (EEDEIDTGVPESTSTDTHPDMDHHNQAGVPLEPRPLRRESEI) are disordered. Positions 425–427 (SEI) match the PDZ-binding motif.

This sequence belongs to the inward rectifier-type potassium channel (TC 1.A.2.1) family. KCNJ2 subfamily. Homotetramer. Homomultimeric and heteromultimeric association with KCNJ4/Kir2.3, resulting in an enhanced G-protein-induced current. Associates, via its PDZ-recognition domain, with a complex containing LIN7A, LIN7B, LIN7C, DLG1, CASK and APBA1. As to expression, found in the apical basilar papilla of the inner ear, brain, muscle, cerebellum, heart and liver.

It localises to the cell membrane. The protein localises to the sarcolemma. The protein resides in the T-tubule. The catalysed reaction is K(+)(in) = K(+)(out). Activated by phosphatidylinositol 4,5 biphosphate (PtdIns(4,5)P2). In terms of biological role, inward rectifier potassium channels are characterized by a greater tendency to allow potassium to flow into the cell rather than out of it. Their voltage dependence is regulated by the concentration of extracellular potassium; as external potassium is raised, the voltage range of the channel opening shifts to more positive voltages. The inward rectification is mainly due to the blockage of outward current by internal magnesium. Can be blocked by external barium. Probably participates in establishing action potential waveform and excitability of neuronal and muscle tissues. This is Inward rectifier potassium channel 2 (KCNJ2) from Gallus gallus (Chicken).